A 260-amino-acid chain; its full sequence is Tropinone reductase homolog At2g29330 (260 aa).

13 to 37 (LVTGGASGIGHAIVEELAGFGAKIH) serves as a coordination point for NADP(+). Substrate is bound at residue S146. Catalysis depends on Y159, which acts as the Proton acceptor.

The protein belongs to the short-chain dehydrogenases/reductases (SDR) family. SDR65C subfamily.

Reductase active only on small flexible lipophilic carbonyls. No activity with cyclic monoterpenes, tropinone, nitrogen-containing tropinone analogs, tropine or pseudotropine as substrate. This Arabidopsis thaliana (Mouse-ear cress) protein is Tropinone reductase homolog At2g29330.